Reading from the N-terminus, the 223-residue chain is Phage shock protein A homolog (223 aa).

Positions Ile29 to Met185 form a coiled coil.

The protein belongs to the PspA/Vipp/IM30 family.

The sequence is that of Phage shock protein A homolog from Deinococcus radiodurans (strain ATCC 13939 / DSM 20539 / JCM 16871 / CCUG 27074 / LMG 4051 / NBRC 15346 / NCIMB 9279 / VKM B-1422 / R1).